Here is a 136-residue protein sequence, read N- to C-terminus: Probable endoribonuclease MazF7 (136 aa).

Positions 115–136 (TGPERGEAATHSPVRWTGGRDP) are disordered.

This sequence belongs to the PemK/MazF family. Forms a complex with cognate antitoxin MazE7.

Its function is as follows. Toxic component of a type II toxin-antitoxin (TA) system. Upon expression in E.coli and M.smegmatis inhibits cell growth and colony formation. Its toxic effect is neutralized by coexpression with cognate antitoxin MazE7. Probably an endoribonuclease. This is Probable endoribonuclease MazF7 (mazF7) from Mycobacterium tuberculosis (strain ATCC 25618 / H37Rv).